Reading from the N-terminus, the 218-residue chain is Putative glutamine transport system permease protein GlnP (218 aa).

Residues threonine 19–alanine 208 form the ABC transmembrane type-1 domain. The next 4 membrane-spanning stretches (helical) occupy residues tyrosine 25–valine 45, phenylalanine 57–proline 79, phenylalanine 86–isoleucine 108, and phenylalanine 187–isoleucine 207.

Belongs to the binding-protein-dependent transport system permease family. HisMQ subfamily.

The protein resides in the cell inner membrane. Part of the binding-protein-dependent transport system for glutamine; probably responsible for the translocation of the substrate across the membrane. In Rickettsia felis (strain ATCC VR-1525 / URRWXCal2) (Rickettsia azadi), this protein is Putative glutamine transport system permease protein GlnP (glnP).